A 474-amino-acid chain; its full sequence is Glutathione synthetase (474 aa).

Alanine 2 is subject to N-acetylalanine. Arginine 125 is a binding site for substrate. Residue glutamate 144 coordinates ATP. The Mg(2+) site is built by glutamate 144 and asparagine 146. Substrate-binding positions include valine 148–serine 151, glutamate 214–asparagine 216, glutamine 220, and arginine 267–tyrosine 270. ATP is bound by residues lysine 305, lysine 364 to asparagine 373, tyrosine 375, and methionine 398 to isoleucine 401. Glutamate 368 serves as a coordination point for Mg(2+). Serine 415 carries the phosphoserine modification. Glutamate 425 is a binding site for ATP. Arginine 450 lines the substrate pocket. Residues lysine 452 and aspartate 458 each coordinate ATP. Valine 461–alanine 462 contributes to the substrate binding site.

It belongs to the eukaryotic GSH synthase family. Homodimer. It depends on Mg(2+) as a cofactor.

It catalyses the reaction gamma-L-glutamyl-L-cysteine + glycine + ATP = glutathione + ADP + phosphate + H(+). The catalysed reaction is gamma-L-glutamyl-(2S)-2-aminobutanoate + glycine + ATP = ophthalmate + ADP + phosphate + H(+). The protein operates within sulfur metabolism; glutathione biosynthesis; glutathione from L-cysteine and L-glutamate: step 2/2. Catalyzes the production of glutathione from gamma-glutamylcysteine and glycine in an ATP-dependent manner. Glutathione (gamma-glutamylcysteinylglycine, GSH) is the most abundant intracellular thiol in living aerobic cells and is required for numerous processes including the protection of cells against oxidative damage, amino acid transport, the detoxification of foreign compounds, the maintenance of protein sulfhydryl groups in a reduced state and acts as a cofactor for a number of enzymes. Participates in ophthalmate biosynthesis in hepatocytes. The protein is Glutathione synthetase of Bos taurus (Bovine).